The sequence spans 436 residues: tRNA-2-methylthio-N(6)-dimethylallyladenosine synthase (436 aa).

The MTTase N-terminal domain maps to 5-121 (RKLFIKTYGC…LPDMLERTEG (117 aa)). Residues C14, C50, C84, C158, C162, and C165 each coordinate [4Fe-4S] cluster. A Radical SAM core domain is found at 144 to 374 (ATRGPAAFLT…TEQQRAAQMA (231 aa)). Residues 373–435 (MAMVGREVGV…PNSLAGERLG (63 aa)) enclose the TRAM domain.

The protein belongs to the methylthiotransferase family. MiaB subfamily. Monomer. It depends on [4Fe-4S] cluster as a cofactor.

Its subcellular location is the cytoplasm. The catalysed reaction is N(6)-dimethylallyladenosine(37) in tRNA + (sulfur carrier)-SH + AH2 + 2 S-adenosyl-L-methionine = 2-methylsulfanyl-N(6)-dimethylallyladenosine(37) in tRNA + (sulfur carrier)-H + 5'-deoxyadenosine + L-methionine + A + S-adenosyl-L-homocysteine + 2 H(+). Its function is as follows. Catalyzes the methylthiolation of N6-(dimethylallyl)adenosine (i(6)A), leading to the formation of 2-methylthio-N6-(dimethylallyl)adenosine (ms(2)i(6)A) at position 37 in tRNAs that read codons beginning with uridine. This Cereibacter sphaeroides (strain ATCC 17023 / DSM 158 / JCM 6121 / CCUG 31486 / LMG 2827 / NBRC 12203 / NCIMB 8253 / ATH 2.4.1.) (Rhodobacter sphaeroides) protein is tRNA-2-methylthio-N(6)-dimethylallyladenosine synthase.